The following is a 185-amino-acid chain: Ribosome-recycling factor (185 aa).

This sequence belongs to the RRF family.

It localises to the cytoplasm. Responsible for the release of ribosomes from messenger RNA at the termination of protein biosynthesis. May increase the efficiency of translation by recycling ribosomes from one round of translation to another. This Saccharophagus degradans (strain 2-40 / ATCC 43961 / DSM 17024) protein is Ribosome-recycling factor.